The chain runs to 197 residues: Nucleoid occlusion factor SlmA (197 aa).

Positions 7 to 67 (INRREHILQC…GLIEFIEDAI (61 aa)) constitute an HTH tetR-type domain. Positions 30–49 (TTAKLAAEVGVSEAALYRHF) form a DNA-binding region, H-T-H motif.

This sequence belongs to the nucleoid occlusion factor SlmA family. In terms of assembly, homodimer. Interacts with FtsZ.

It is found in the cytoplasm. It localises to the nucleoid. Functionally, required for nucleoid occlusion (NO) phenomenon, which prevents Z-ring formation and cell division over the nucleoid. Acts as a DNA-associated cell division inhibitor that binds simultaneously chromosomal DNA and FtsZ, and disrupts the assembly of FtsZ polymers. SlmA-DNA-binding sequences (SBS) are dispersed on non-Ter regions of the chromosome, preventing FtsZ polymerization at these regions. The chain is Nucleoid occlusion factor SlmA from Shewanella denitrificans (strain OS217 / ATCC BAA-1090 / DSM 15013).